The primary structure comprises 162 residues: Protein NrdI (162 aa).

This sequence belongs to the NrdI family.

Probably involved in ribonucleotide reductase function. This is Protein NrdI from Streptococcus pyogenes serotype M3 (strain ATCC BAA-595 / MGAS315).